Reading from the N-terminus, the 278-residue chain is Dermonecrotic toxin LhSicTox-alphaIV1ii (278 aa).

Residue H5 is part of the active site. Residues E25 and D27 each contribute to the Mg(2+) site. H41 acts as the Nucleophile in catalysis. 2 disulfide bridges follow: C45–C51 and C47–C192. D85 serves as a coordination point for Mg(2+).

It belongs to the arthropod phospholipase D family. Class II subfamily. Requires Mg(2+) as cofactor. In terms of tissue distribution, expressed by the venom gland.

It is found in the secreted. It carries out the reaction an N-(acyl)-sphingosylphosphocholine = an N-(acyl)-sphingosyl-1,3-cyclic phosphate + choline. The enzyme catalyses an N-(acyl)-sphingosylphosphoethanolamine = an N-(acyl)-sphingosyl-1,3-cyclic phosphate + ethanolamine. The catalysed reaction is a 1-acyl-sn-glycero-3-phosphocholine = a 1-acyl-sn-glycero-2,3-cyclic phosphate + choline. It catalyses the reaction a 1-acyl-sn-glycero-3-phosphoethanolamine = a 1-acyl-sn-glycero-2,3-cyclic phosphate + ethanolamine. Functionally, dermonecrotic toxins cleave the phosphodiester linkage between the phosphate and headgroup of certain phospholipids (sphingolipid and lysolipid substrates), forming an alcohol (often choline) and a cyclic phosphate. This toxin acts on sphingomyelin (SM). It may also act on ceramide phosphoethanolamine (CPE), lysophosphatidylcholine (LPC) and lysophosphatidylethanolamine (LPE), but not on lysophosphatidylserine (LPS), and lysophosphatidylglycerol (LPG). It acts by transphosphatidylation, releasing exclusively cyclic phosphate products as second products. Induces dermonecrosis, hemolysis, increased vascular permeability, edema, inflammatory response, and platelet aggregation. The sequence is that of Dermonecrotic toxin LhSicTox-alphaIV1ii from Loxosceles hirsuta (Recluse spider).